The following is a 100-amino-acid chain: Urease subunit gamma (100 aa).

Belongs to the urease gamma subunit family. In terms of assembly, heterotrimer of UreA (gamma), UreB (beta) and UreC (alpha) subunits. Three heterotrimers associate to form the active enzyme.

The protein resides in the cytoplasm. It carries out the reaction urea + 2 H2O + H(+) = hydrogencarbonate + 2 NH4(+). Its pathway is nitrogen metabolism; urea degradation; CO(2) and NH(3) from urea (urease route): step 1/1. This Synechocystis sp. (strain ATCC 27184 / PCC 6803 / Kazusa) protein is Urease subunit gamma.